We begin with the raw amino-acid sequence, 520 residues long: Sodium-dependent dicarboxylate transporter SdcS (520 aa).

14 helical membrane-spanning segments follow: residues 30 to 50 (AGQL…LLFF), 55 to 75 (LPWK…WWIT), 77 to 97 (AIPI…GHIL), 104 to 124 (SEYG…AIAM), 160 to 180 (SMFV…LAII), 207 to 227 (IGYA…PLII), 242 to 262 (FAKW…ITWL), 298 to 318 (KVVQ…EFLL), 323 to 343 (VTSS…LFVI), 362 to 382 (ELPW…KGIS), 399 to 419 (GVSP…LTEV), 428 to 448 (MILP…LLLM), 452 to 472 (AMAA…AIIF), and 491 to 511 (LISA…VLGI).

Belongs to the SLC13A/DASS transporter (TC 2.A.47) family. NADC subfamily.

The protein resides in the cell membrane. Functionally, mediates the transport of the dicarboxylates fumarate, malate, and succinate across the cytoplasmic membrane via a Na(+)-electrochemical gradient. The polypeptide is Sodium-dependent dicarboxylate transporter SdcS (sdcS) (Staphylococcus aureus (strain MSSA476)).